Reading from the N-terminus, the 23-residue chain is Protein YsaE (23 aa).

The sequence is that of Protein YsaE from Escherichia coli (strain K12).